The sequence spans 319 residues: Beta-xylosidase (319 aa).

Asp14 acts as the Proton acceptor in catalysis. Catalysis depends on Glu222, which acts as the Proton donor.

Belongs to the glycosyl hydrolase 43 family.

The catalysed reaction is Hydrolysis of (1-&gt;4)-beta-D-xylans, to remove successive D-xylose residues from the non-reducing termini.. In terms of biological role, exoxylanase capable of acting on certain xylans and xylooligosaccharides. This chain is Beta-xylosidase (xynB), found in Xylanibacter ruminicola (Prevotella ruminicola).